Here is a 505-residue protein sequence, read N- to C-terminus: Histidine ammonia-lyase (505 aa).

The 5-imidazolinone (Ala-Gly) cross-link spans Ala141–Gly143. 2,3-didehydroalanine (Ser) is present on Ser142.

This sequence belongs to the PAL/histidase family. In terms of processing, contains an active site 4-methylidene-imidazol-5-one (MIO), which is formed autocatalytically by cyclization and dehydration of residues Ala-Ser-Gly.

It localises to the cytoplasm. It catalyses the reaction L-histidine = trans-urocanate + NH4(+). It functions in the pathway amino-acid degradation; L-histidine degradation into L-glutamate; N-formimidoyl-L-glutamate from L-histidine: step 1/3. This chain is Histidine ammonia-lyase, found in Bacillus cereus (strain 03BB102).